The chain runs to 207 residues: Small ribosomal subunit protein uS4 (207 aa).

The segment at 30-53 (DKSKFDTKPGQHGRTSGQRTSDFG) is disordered. Over residues 42–52 (GRTSGQRTSDF) the composition is skewed to polar residues. Residues 97 to 157 (SRLDNVVYRM…EKSKKQARIV (61 aa)) enclose the S4 RNA-binding domain.

The protein belongs to the universal ribosomal protein uS4 family. As to quaternary structure, part of the 30S ribosomal subunit. Contacts protein S5. The interaction surface between S4 and S5 is involved in control of translational fidelity.

Its function is as follows. One of the primary rRNA binding proteins, it binds directly to 16S rRNA where it nucleates assembly of the body of the 30S subunit. In terms of biological role, with S5 and S12 plays an important role in translational accuracy. This is Small ribosomal subunit protein uS4 from Delftia acidovorans (strain DSM 14801 / SPH-1).